A 90-amino-acid chain; its full sequence is Caspase recruitment domain-containing protein 18 (90 aa).

Residues 1-90 (MADQLLRKKR…PQLASKMGLH (90 aa)) form the CARD domain.

In terms of assembly, interacts with pro-CASP1. Interacts with CARD8. Primarily expressed in the heart and placenta.

Functionally, inhibits generation of IL-1-beta by interacting with caspase-1 and preventing its association with RIP2. Down-regulates the release of IL1B. This is Caspase recruitment domain-containing protein 18 (CARD18) from Homo sapiens (Human).